Consider the following 320-residue polypeptide: MHAIFSSFSRKVVVNVGASSQSQLTKMVKKKPNQSRHLLPSRLSSPSSVPHFVPSAVSRSAKVHGFFASKLGNTNLKLKFGNVMESRAGFFSSELPSHGFESGGFTGFQKRGWKSWINGANGVVFGLVIANAAVFTMWRVSDRSWMLSTYSFTSGYIHTLITSGFSHIGTSQIILNMIGISYFGSRIARTLGPLYLLKLYFAGALGGSVCFLSYHALLATLKGEGVVIKDHQSTAPISQLLGADGSMFAIALLDMFIYPKVTTYFALMLRVHVMFRIINLGVEILNIPEGGPNHIASSSGQLGGVVVAAMAWARIKKGRF.

The transit peptide at 1-87 (MHAIFSSFSR…LKFGNVMESR (87 aa)) directs the protein to the chloroplast. 5 helical membrane passes run 116–136 (WING…AVFT), 160–180 (LITS…MIGI), 199–219 (LYFA…ALLA), 247–267 (MFAI…YFAL), and 295–315 (IASS…WARI).

The protein belongs to the peptidase S54 family.

Its subcellular location is the plastid. It localises to the chloroplast membrane. Functionally, probable rhomboid-type serine protease that catalyzes intramembrane proteolysis. This is Rhomboid-like protein 17, chloroplastic from Arabidopsis thaliana (Mouse-ear cress).